A 1242-amino-acid chain; its full sequence is Membrane-associated phosphatidylinositol transfer protein 1 (1242 aa).

Threonine 59, threonine 282, and threonine 287 each carry phosphothreonine. The segment at 259 to 330 (CNTGSEGPEA…HGGGVSPQSL (72 aa)) is disordered. Positions 272-282 (GKPSTETQPGT) are enriched in polar residues. Low complexity predominate over residues 299–319 (ASPDASFGKQWSSSSRSSYSS). 9 positions are modified to phosphoserine: serine 300, serine 304, serine 319, serine 326, serine 329, serine 342, serine 345, serine 346, and serine 373. Residue serine 382 is modified to Phosphoserine; by CDK1. Residues 581 to 593 (AGTGSRGSSRRGS) are compositionally biased toward low complexity. Residues 581-678 (AGTGSRGSSR…PASSEAPDGP (98 aa)) are disordered. Residues serine 593, serine 600, and serine 621 each carry the phosphoserine modification. The segment covering 643–656 (GSQNSLQVAPTVTS) has biased composition (polar residues). A DDHD domain is found at 684 to 878 (LDFKVSGFFL…VAFILRQVIE (195 aa)). Serine 894 is modified (phosphoserine). Positions 1207 to 1242 (RSRGPSQVDLEGPGTPPTTLARGKTRSISLKLDSEE) are disordered. Position 1209 is an omega-N-methylarginine (arginine 1209). Serine 1235 carries the phosphoserine modification.

It belongs to the PtdIns transfer protein family. PI transfer class IIA subfamily. As to quaternary structure, interacts with PIK4CA and VAPB. Interacts with PTK2B via its C-terminus. Interacts with RHOA. Has higher affinity for the inactive, GDP-bound form of RHOA. The CDK1-phosphorylated form interacts with PLK1. Post-translationally, phosphorylated on multiple sites by CDK1 at the onset of mitosis. Phosphorylation facilitates dissociation from the Golgi complex and is required for interaction with PLK1. In terms of processing, phosphorylated on threonine residues upon treatment with oleic acid. Phosphorylated on tyrosine residues by PTK2B.

It is found in the cytoplasm. The protein resides in the golgi apparatus. Its subcellular location is the golgi stack membrane. The protein localises to the endoplasmic reticulum membrane. It localises to the lipid droplet. It is found in the cleavage furrow. The protein resides in the midbody. The enzyme catalyses a 1,2-diacyl-sn-glycero-3-phospho-(1D-myo-inositol)(in) = a 1,2-diacyl-sn-glycero-3-phospho-(1D-myo-inositol)(out). Functionally, catalyzes the transfer of phosphatidylinositol (PI) between membranes. Binds PI, phosphatidylcholine (PC) and phosphatidic acid (PA) with the binding affinity order of PI &gt; PA &gt; PC. Regulates RHOA activity, and plays a role in cytoskeleton remodeling. Necessary for normal completion of cytokinesis. Plays a role in maintaining normal diacylglycerol levels in the Golgi apparatus. Necessary for maintaining the normal structure of the endoplasmic reticulum and the Golgi apparatus. Required for protein export from the endoplasmic reticulum and the Golgi. Binds calcium ions. The sequence is that of Membrane-associated phosphatidylinositol transfer protein 1 (Pitpnm1) from Rattus norvegicus (Rat).